Consider the following 50-residue polypeptide: Large ribosomal subunit protein bL36B (50 aa).

This sequence belongs to the bacterial ribosomal protein bL36 family.

The protein is Large ribosomal subunit protein bL36B of Pseudomonas aeruginosa (strain UCBPP-PA14).